Consider the following 860-residue polypeptide: DNA mismatch repair protein MutS (860 aa).

620-627 lines the ATP pocket; that stretch reads GPNMGGKS.

Belongs to the DNA mismatch repair MutS family.

Functionally, this protein is involved in the repair of mismatches in DNA. It is possible that it carries out the mismatch recognition step. This protein has a weak ATPase activity. The protein is DNA mismatch repair protein MutS of Dechloromonas aromatica (strain RCB).